The following is a 396-amino-acid chain: MALVRWGLKRQNFHPLRRRRRALLLKLTVVIISVLLFCEYFIYYLVLFRCHWPEVKTLAHGGRQEPVLKAMFLADTHLLGEIRGHWLDKLRREWQMERAFQTALWLLQPEVVFILGDIFDEGKWSSDQAWADDVQRFQRMFRHDSHVQLKVVIGNHDVGFHYQMSKYRIKRFEKVFGSERLLSLKGVNFVMVNSVAMEGDGCIICSEEEAELREISRKLNCSQEVPGSSQCDREPEPRLPLSAPVLLQHYPLYRASDANCSGEDAAPPEERNVPFEEKYDVLSREASQKLLWWLRPRLVLSGHTHSACEVLHPGGAPEVSVPSFSWRNRNNPSFIMGSLTSRDYALSKCYLPFEDTVLTMYGAAAGFLMILILVHFEHLPSPFLCGWKLCRLHMRR.

A helical transmembrane segment spans residues 28-48 (TVVIISVLLFCEYFIYYLVLF). A divalent metal cation-binding residues include D75, D117, N155, H249, H303, and H305. The chain crosses the membrane as a helical span at residues 356 to 376 (TVLTMYGAAAGFLMILILVHF).

Belongs to the metallophosphoesterase superfamily. MPPE1 family. In terms of assembly, interacts with GPI-anchor proteins (via the GPI portion). Interacts with TMED10. It depends on Mn(2+) as a cofactor.

Its subcellular location is the endoplasmic reticulum-Golgi intermediate compartment membrane. Functionally, metallophosphoesterase that catalyzes the removal of a side-chain ethanolamine-phosphate (EtNP) from the second mannose of the GPI-anchor protein intermediate. Participates in the glycan remodeling steps of GPI-anchor maturation to allow an efficient transport of GPI-anchor proteins from the endoplasmic reticulum to the Golgi. In Mus musculus (Mouse), this protein is Metallophosphoesterase 1.